Consider the following 233-residue polypeptide: Purine nucleoside phosphorylase DeoD-type (233 aa).

Histidine 4 contacts a purine D-ribonucleoside. Phosphate is bound by residues glycine 20, arginine 24, arginine 43, and arginine 87 to threonine 90. Residues glutamate 179–glutamate 181 and serine 203–aspartate 204 each bind a purine D-ribonucleoside. Aspartate 204 acts as the Proton donor in catalysis.

Belongs to the PNP/UDP phosphorylase family. Homohexamer; trimer of homodimers.

It catalyses the reaction a purine D-ribonucleoside + phosphate = a purine nucleobase + alpha-D-ribose 1-phosphate. The catalysed reaction is a purine 2'-deoxy-D-ribonucleoside + phosphate = a purine nucleobase + 2-deoxy-alpha-D-ribose 1-phosphate. In terms of biological role, catalyzes the reversible phosphorolytic breakdown of the N-glycosidic bond in the beta-(deoxy)ribonucleoside molecules, with the formation of the corresponding free purine bases and pentose-1-phosphate. The sequence is that of Purine nucleoside phosphorylase DeoD-type from Helicobacter pylori (strain J99 / ATCC 700824) (Campylobacter pylori J99).